The sequence spans 184 residues: Holliday junction branch migration complex subunit RuvA (184 aa).

The segment at 1–64 is domain I; it reads MIRAIEGIIT…EDANLLYGFL (64 aa). A domain II region spans residues 65–144; sequence DTNEQKMFEM…SDESVPGYQN (80 aa). Position 144 (N144) is a region of interest, flexible linker. Residues 144–184 form a domain III region; that stretch reads NEALLALEALGFKREKIVKILPDLKSTSTSELVKEALKKLA.

The protein belongs to the RuvA family. In terms of assembly, homotetramer. Forms an RuvA(8)-RuvB(12)-Holliday junction (HJ) complex. HJ DNA is sandwiched between 2 RuvA tetramers; dsDNA enters through RuvA and exits via RuvB. An RuvB hexamer assembles on each DNA strand where it exits the tetramer. Each RuvB hexamer is contacted by two RuvA subunits (via domain III) on 2 adjacent RuvB subunits; this complex drives branch migration. In the full resolvosome a probable DNA-RuvA(4)-RuvB(12)-RuvC(2) complex forms which resolves the HJ.

It is found in the cytoplasm. Its function is as follows. The RuvA-RuvB-RuvC complex processes Holliday junction (HJ) DNA during genetic recombination and DNA repair, while the RuvA-RuvB complex plays an important role in the rescue of blocked DNA replication forks via replication fork reversal (RFR). RuvA specifically binds to HJ cruciform DNA, conferring on it an open structure. The RuvB hexamer acts as an ATP-dependent pump, pulling dsDNA into and through the RuvAB complex. HJ branch migration allows RuvC to scan DNA until it finds its consensus sequence, where it cleaves and resolves the cruciform DNA. This Campylobacter curvus (strain 525.92) protein is Holliday junction branch migration complex subunit RuvA.